Here is a 303-residue protein sequence, read N- to C-terminus: Caspase-7 (303 aa).

M1 bears the N-acetylmethionine mark. Residues 1-23 (MTDDQDCAAELEKVDSSSEDGVD) constitute a propeptide that is removed on maturation. The disordered stretch occupies residues 1-26 (MTDDQDCAAELEKVDSSSEDGVDAKP). The span at 10–26 (ELEKVDSSSEDGVDAKP) shows a compositional bias: basic and acidic residues. S30 carries the post-translational modification Phosphoserine. The interval 38–41 (KKKR) is exosite. Residues 76–87 (KNFDKATGMDVR) form a loop L1 region. The active site involves H144. T173 bears the Phosphothreonine mark. The active site involves C186. The loop L2 stretch occupies residues 187–196 (RGTELDDGIQ). Residues 199–206 (SGPINDID) constitute a propeptide that is removed on maturation. The tract at residues 226–238 (VPGYYSWRNPGKG) is loop L3. S239 bears the Phosphoserine mark. A loop L4 region spans residues 274-288 (ESQSDDPRFNEKKQI).

This sequence belongs to the peptidase C14A family. Heterotetramer that consists of two anti-parallel arranged heterodimers, each one formed by a 20 kDa (p20) and a 11 kDa (p11) subunit. Interacts with XIAP (via its second BIR domain); inhibiting CASP7 activity. Interacts with BIRC6/bruce. Interacts with ATXN3 (short isoform 1). Interacts with HSPA5. Post-translationally, cleavage by different proteases, such as granzyme B (GZMB), caspase-1 (CASP1), caspase-8 (CASP8) or caspase-9 (CASP9) generate the two active subunits. Its involvement in different programmed cell death processes is probably specified by the protease that activates CASP7. Cleaved and activated by initiator caspases (CASP8 and/or CASP9), leading to execution phase of apoptosis. Cleavage and maturation by GZMB regulates granzyme-mediated programmed cell death. Cleaved and activated by CASP1 in response to bacterial infection. Propeptide domains can also be cleaved efficiently by CASP3. Active heterodimers between the small subunit of caspase-7 and the large subunit of CASP3, and vice versa, also occur. Also cleaved at the N-terminus at alternative sites by CAPN1, leading to its activation. Phosphorylation at Ser-30 and Ser-239 by PAK2 inhibits its activity. Phosphorylation at Ser-30 prevents cleavage and activation by initiator caspase CASP9, while phosphorylation at Ser-239 prevents thiol protease activity by preventing substrate-binding. In terms of processing, ubiquitinated by BIRC6; this activity is inhibited by DIABLO/SMAC. Highly expressed in heart, lung, liver and kidney. Low levels in spleen, skeletal muscle and testis. No expression in the brain.

It is found in the cytoplasm. It localises to the cytosol. The protein localises to the nucleus. Its subcellular location is the secreted. The protein resides in the extracellular space. It catalyses the reaction Strict requirement for an Asp residue at position P1 and has a preferred cleavage sequence of Asp-Glu-Val-Asp-|-.. Its activity is regulated as follows. During activation, the N-terminal disordered prodomain is removed by cleavage. Concomitantly, double cleavage gives rise to a large Caspase-7 subunit p20 and a small Caspase-7 subunit p11. The two large and two small subunits then assemble to form the active CASP7 complex. Can be cleaved and activated by different caspases, depending on the context. Cleaved and activated by initiator caspases (CASP8 and/or CASP9), leading to execution phase of apoptosis. Cleavage and maturation by GZMB regulates granzyme-mediated programmed cell death. Cleavage and maturation by CASP1 regulates pyroptosis. Inhibited by XIAP, which directly binds to the active site pocket and obstructs substrate entry. Phosphorylation at Ser-30 and Ser-239 by PAK2 inhibits its activity. Inhibited by BIRC6; following inhibition of BIRC6-caspase binding by DIABLO/SMAC, BIRC6 is subjected to caspase cleavage, leading to an increase in active caspases. Functionally, thiol protease involved in different programmed cell death processes, such as apoptosis, pyroptosis or granzyme-mediated programmed cell death, by proteolytically cleaving target proteins. Has a marked preference for Asp-Glu-Val-Asp (DEVD) consensus sequences, with some plasticity for alternate non-canonical sequences. Its involvement in the different programmed cell death processes is probably determined by upstream proteases that activate CASP7. Acts as an effector caspase involved in the execution phase of apoptosis: following cleavage and activation by initiator caspases (CASP8 and/or CASP9), mediates execution of apoptosis by catalyzing cleavage of proteins, such as CLSPN, PARP1, PTGES3 and YY1. Compared to CASP3, acts as a minor executioner caspase and cleaves a limited set of target proteins. Acts as a key regulator of the inflammatory response in response to bacterial infection by catalyzing cleavage and activation of the sphingomyelin phosphodiesterase SMPD1 in the extracellular milieu, thereby promoting membrane repair. Regulates pyroptosis in intestinal epithelial cells: cleaved and activated by CASP1 in response to S.typhimurium infection, promoting its secretion to the extracellular milieu, where it catalyzes activation of SMPD1, generating ceramides that repair membranes and counteract the action of gasdermin-D (GSDMD) pores. Regulates granzyme-mediated programmed cell death in hepatocytes: cleaved and activated by granzyme B (GZMB) in response to bacterial infection, promoting its secretion to the extracellular milieu, where it catalyzes activation of SMPD1, generating ceramides that repair membranes and counteract the action of perforin (PRF1) pores. Following cleavage by CASP1 in response to inflammasome activation, catalyzes processing and inactivation of PARP1, alleviating the transcription repressor activity of PARP1. Acts as an inhibitor of type I interferon production during virus-induced apoptosis by mediating cleavage of antiviral proteins CGAS, IRF3 and MAVS, thereby preventing cytokine overproduction. Cleaves and activates sterol regulatory element binding proteins (SREBPs). Cleaves phospholipid scramblase proteins XKR4, XKR8 and XKR9. Cleaves BIRC6 following inhibition of BIRC6-caspase binding by DIABLO/SMAC. This chain is Caspase-7, found in Mus musculus (Mouse).